The sequence spans 463 residues: Putative ankyrin repeat protein R579 (463 aa).

ANK repeat units follow at residues 124–154 (LKTD…KCTI), 156–181 (SITR…SENI), 242–271 (KEKN…QFNP), 273–299 (IYLW…DYRP), 300–328 (HIDR…VSQE), 329–355 (NINE…MGAD), 356–385 (INYK…DITT), and 387–416 (GSND…TITL).

This is Putative ankyrin repeat protein R579 from Acanthamoeba polyphaga (Amoeba).